We begin with the raw amino-acid sequence, 340 residues long: MGVDLGGLVEPREIELKELNNRTVAVDAYNTLYQFLSIIRQQDGAPLADDRGNVTSHLSGIIYRVTNLVEEGMKPVFVFDGKPPSFKAETIKARAEVREAARQMYEAAKAAGSAEAYKYAQASTSINRQIVDDAKVLLGYMGIPFIVAPSEGEAQAAYMVSRGAADYVGSQDYDSLLFGAPRVVRNIAITGKRKVPRKNIYMDVKPEVIELQEVLATLGLTREELIDMAILVGTDYNPGIFKVGPKTALKLVKKHGDNMPAILDELGQTIENWEAIKEFFLHPTVTDDYQVKWGKPEPAKIKEFLCEEHSFSVDRVDKVLERLTTAVSETTKQKTLSSWF.

The segment at 1-98 (MGVDLGGLVE…ETIKARAEVR (98 aa)) is N-domain. 7 residues coordinate Mg(2+): D27, D80, E151, E153, D172, D174, and D235. Residues 115 to 256 (EAYKYAQAST…TALKLVKKHG (142 aa)) form an I-domain region. Residues 332-340 (KQKTLSSWF) form an interaction with PCNA region.

It belongs to the XPG/RAD2 endonuclease family. FEN1 subfamily. As to quaternary structure, interacts with PCNA. PCNA stimulates the nuclease activity without altering cleavage specificity. Requires Mg(2+) as cofactor.

Structure-specific nuclease with 5'-flap endonuclease and 5'-3' exonuclease activities involved in DNA replication and repair. During DNA replication, cleaves the 5'-overhanging flap structure that is generated by displacement synthesis when DNA polymerase encounters the 5'-end of a downstream Okazaki fragment. Binds the unpaired 3'-DNA end and kinks the DNA to facilitate 5' cleavage specificity. Cleaves one nucleotide into the double-stranded DNA from the junction in flap DNA, leaving a nick for ligation. Also involved in the base excision repair (BER) pathway. Acts as a genome stabilization factor that prevents flaps from equilibrating into structures that lead to duplications and deletions. Also possesses 5'-3' exonuclease activity on nicked or gapped double-stranded DNA. This Methanocella arvoryzae (strain DSM 22066 / NBRC 105507 / MRE50) protein is Flap endonuclease 1.